The primary structure comprises 339 residues: MQGFEDENRIITSTMKMEDIDIENSLRPKTLEDYLGQEKSKEQLSIFIEAAKSRNEQLDHVLLYGPPGLGKTTLASIIANEMGVNLRITSGPAIERAGDLAAILTNLNENDVLFIDEIHRINRSVEEVLYPAMEDFCLDIIIGKGPSARSIRLDLPKFTLIGATTRAGMLTNPLRDRFGVICKLDYYTVDELSKIVLRSSSILDAEIQSNGALELAKRSRGTPRIANRLLKRVRDFAQVRADGKITDKVAKDALELLGVDSLGLDFVDEKLLMTIIEKFRGGPVGLDTLAASIGEDRNTIEDVYEPYLLQLGFINRGPRGRVAMPLAYEHLKIPYPNEK.

Residues 1–187 (MQGFEDENRI…FGVICKLDYY (187 aa)) are large ATPase domain (RuvB-L). ATP is bound by residues Leu26, Arg27, Gly68, Lys71, Thr72, Thr73, 134–136 (EDF), Arg177, Tyr187, and Arg224. Thr72 is a Mg(2+) binding site. Residues 188–258 (TVDELSKIVL…VAKDALELLG (71 aa)) are small ATPAse domain (RuvB-S). A head domain (RuvB-H) region spans residues 261–339 (SLGLDFVDEK…HLKIPYPNEK (79 aa)). Arg297, Arg316, and Arg321 together coordinate DNA.

Belongs to the RuvB family. As to quaternary structure, homohexamer. Forms an RuvA(8)-RuvB(12)-Holliday junction (HJ) complex. HJ DNA is sandwiched between 2 RuvA tetramers; dsDNA enters through RuvA and exits via RuvB. An RuvB hexamer assembles on each DNA strand where it exits the tetramer. Each RuvB hexamer is contacted by two RuvA subunits (via domain III) on 2 adjacent RuvB subunits; this complex drives branch migration. In the full resolvosome a probable DNA-RuvA(4)-RuvB(12)-RuvC(2) complex forms which resolves the HJ.

It is found in the cytoplasm. The catalysed reaction is ATP + H2O = ADP + phosphate + H(+). Its function is as follows. The RuvA-RuvB-RuvC complex processes Holliday junction (HJ) DNA during genetic recombination and DNA repair, while the RuvA-RuvB complex plays an important role in the rescue of blocked DNA replication forks via replication fork reversal (RFR). RuvA specifically binds to HJ cruciform DNA, conferring on it an open structure. The RuvB hexamer acts as an ATP-dependent pump, pulling dsDNA into and through the RuvAB complex. RuvB forms 2 homohexamers on either side of HJ DNA bound by 1 or 2 RuvA tetramers; 4 subunits per hexamer contact DNA at a time. Coordinated motions by a converter formed by DNA-disengaged RuvB subunits stimulates ATP hydrolysis and nucleotide exchange. Immobilization of the converter enables RuvB to convert the ATP-contained energy into a lever motion, pulling 2 nucleotides of DNA out of the RuvA tetramer per ATP hydrolyzed, thus driving DNA branch migration. The RuvB motors rotate together with the DNA substrate, which together with the progressing nucleotide cycle form the mechanistic basis for DNA recombination by continuous HJ branch migration. Branch migration allows RuvC to scan DNA until it finds its consensus sequence, where it cleaves and resolves cruciform DNA. The protein is Holliday junction branch migration complex subunit RuvB of Clostridioides difficile (strain 630) (Peptoclostridium difficile).